Consider the following 130-residue polypeptide: Small ribosomal subunit protein uS11 (130 aa).

Belongs to the universal ribosomal protein uS11 family. In terms of assembly, part of the 30S ribosomal subunit. Interacts with proteins S7 and S18. Binds to IF-3.

Located on the platform of the 30S subunit, it bridges several disparate RNA helices of the 16S rRNA. Forms part of the Shine-Dalgarno cleft in the 70S ribosome. This chain is Small ribosomal subunit protein uS11, found in Prochlorococcus marinus (strain MIT 9301).